Consider the following 103-residue polypeptide: Large ribosomal subunit protein bL21 (103 aa).

It belongs to the bacterial ribosomal protein bL21 family. Part of the 50S ribosomal subunit. Contacts protein L20.

Functionally, this protein binds to 23S rRNA in the presence of protein L20. The protein is Large ribosomal subunit protein bL21 of Acetivibrio thermocellus (strain ATCC 27405 / DSM 1237 / JCM 9322 / NBRC 103400 / NCIMB 10682 / NRRL B-4536 / VPI 7372) (Clostridium thermocellum).